Reading from the N-terminus, the 1576-residue chain is Protein Shroom (1576 aa).

7 disordered regions span residues 1-31, 46-100, 112-142, 187-244, 267-434, 589-609, and 621-660; these read MKMR…ENNN, SNGA…TQAG, YDQT…DSTS, RQSH…SSTE, ISES…ISVT, VERQ…HSQS, and PNNL…SLLP. Polar residues predominate over residues 10 to 21; sequence GNGSEMGESTKS. 3 stretches are compositionally biased toward low complexity: residues 46 to 69, 76 to 91, and 128 to 142; these read SNGA…AGSV, HNSS…GSSL, and SEGY…DSTS. The segment covering 189–211 has biased composition (basic residues); sequence SHSHSHSHAHSHSNSHGHSHGHA. 2 stretches are compositionally biased toward low complexity: residues 212 to 244 and 267 to 283; these read HSAS…SSTE and ISES…SSRV. Residues 305 to 317 are compositionally biased toward polar residues; it reads DSSPTASNSSQMM. Positions 376–388 are enriched in low complexity; that stretch reads QSTLSTQSSLLEL. Residues 399 to 415 are compositionally biased toward polar residues; sequence MGQSHSMGDLQQKNPHQ. S404 carries the post-translational modification Phosphoserine. Residues 445–920 form an F-actin binding region required for planar polarity and cortical localization region; it reads APQPPAGKPS…LESNQQKRSN (476 aa). Residues 633-643 are compositionally biased toward polar residues; sequence TGSNSASTRDC. Phosphoserine occurs at positions 667 and 668. 7 disordered regions span residues 699 to 728, 743 to 823, 849 to 876, 910 to 939, 1036 to 1055, 1091 to 1116, and 1210 to 1244; these read ISFN…SSAT, AALA…NCFA, VPKK…HHAT, NLES…NTDP, GYGK…SQSY, PTAT…SHSD, and SFAN…DVHD. Over residues 748–759 the composition is skewed to basic residues; sequence QQHHPQQHRHAQ. Pro residues predominate over residues 798 to 816; the sequence is PLPPPPPPEVLQPRPPPSP. 2 stretches are compositionally biased toward polar residues: residues 910–923 and 1042–1055; these read NLES…NSKA and KPVT…SQSY. Composition is skewed to pro residues over residues 1094–1108 and 1217–1229; these read TPTP…PPRL and MTPP…PPPL. Acidic residues predominate over residues 1230 to 1239; it reads EPEEEEEQEE. The stretch at 1232 to 1296 forms a coiled coil; the sequence is EEEEEQEEND…LEAAREEHQT (65 aa). The 268-residue stretch at 1305-1572 folds into the ASD2 domain; the sequence is RQPIELDYEQ…QLSSLSDALV (268 aa).

This sequence belongs to the shroom family. In terms of assembly, monomer or homodimer. Interacts with Rok. As to quaternary structure, binds (via N-terminus) to F-actin.

The protein resides in the cell junction. The protein localises to the adherens junction. It localises to the cytoplasm. Its subcellular location is the cytoskeleton. It is found in the apical cell membrane. Functionally, binds to Rho-kinase Rok and targets it to the apical cell cortex where it mediates apical constriction. During embryogenic axis elongation, required for the localization to adherens junctions and the establishment of planar polarization of both Rho-kinase Rok and myosin regulatory light chain sqh. May be involved in the assembly of microtubule arrays during cell elongation. This is Protein Shroom from Drosophila melanogaster (Fruit fly).